A 207-amino-acid chain; its full sequence is Cytochrome c biogenesis ATP-binding export protein CcmA (207 aa).

In terms of domain architecture, ABC transporter spans 4-207; that stretch reads LEVRELLCER…RISLTQTRAV (204 aa). 36–43 contributes to the ATP binding site; the sequence is GSNGAGKT.

The protein belongs to the ABC transporter superfamily. CcmA exporter (TC 3.A.1.107) family. As to quaternary structure, the complex is composed of two ATP-binding proteins (CcmA) and two transmembrane proteins (CcmB).

It localises to the cell inner membrane. The catalysed reaction is heme b(in) + ATP + H2O = heme b(out) + ADP + phosphate + H(+). Functionally, part of the ABC transporter complex CcmAB involved in the biogenesis of c-type cytochromes; once thought to export heme, this seems not to be the case, but its exact role is uncertain. Responsible for energy coupling to the transport system. The sequence is that of Cytochrome c biogenesis ATP-binding export protein CcmA from Shigella dysenteriae serotype 1 (strain Sd197).